Here is a 75-residue protein sequence, read N- to C-terminus: Small ribosomal subunit protein bS18c (75 aa).

It belongs to the bacterial ribosomal protein bS18 family. Part of the 30S ribosomal subunit.

It is found in the plastid. The protein resides in the chloroplast. This Adiantum capillus-veneris (Maidenhair fern) protein is Small ribosomal subunit protein bS18c.